Consider the following 424-residue polypeptide: Histone-binding protein RBBP7 (424 aa).

7 WD repeats span residues 47 to 121 (QWLP…KINH), 127 to 172 (RARY…LRLR), 180 to 216 (GLSW…KIVD), 227 to 268 (VVED…HSVD), 274 to 311 (VNCL…LHSF), 317 to 368 (EIFQ…LFIH), and 375 to 402 (ISDF…IWQM). The tract at residues 359 to 404 (DGPPELLFIHGGHTAKISDFSWNPNEPWVICSVSEDNIMQIWQMAE) is interaction with HAT1.

It belongs to the WD repeat RBAP46/RBAP48/MSI1 family. In terms of assembly, binds directly to helix 1 of the histone fold of histone H4, a region that is not accessible when H4 is in chromatin. Also interacts with histone H2B and HAT1.

Its subcellular location is the nucleus. Functionally, core histone-binding subunit that may target chromatin remodeling factors, histone acetyltransferases and histone deacetylases to their histone substrates in a manner that is regulated by nucleosomal DNA. Component of several complexes which regulate chromatin metabolism. The polypeptide is Histone-binding protein RBBP7 (RBBP7) (Gallus gallus (Chicken)).